The sequence spans 85 residues: Large ribosomal subunit protein bL27 (85 aa).

The interval 1–21 is disordered; the sequence is MAHKKGVGSSRNGRDSDGQRL.

This sequence belongs to the bacterial ribosomal protein bL27 family.

This Citrifermentans bemidjiense (strain ATCC BAA-1014 / DSM 16622 / JCM 12645 / Bem) (Geobacter bemidjiensis) protein is Large ribosomal subunit protein bL27.